The primary structure comprises 314 residues: Olfactory receptor 1E5 (314 aa).

Topologically, residues 1 to 25 are extracellular; that stretch reads MMGQNQTSISDFLLLGLPIQPEQQN. Residue Asn5 is glycosylated (N-linked (GlcNAc...) asparagine). The helical transmembrane segment at 26-49 threads the bilayer; it reads LCYALFLAMYLTTLLGNLLIIVLI. The Cytoplasmic portion of the chain corresponds to 50–57; that stretch reads RLDSHLHT. Residues 58–79 traverse the membrane as a helical segment; that stretch reads PMYLFLSNLSFSDLCFSSVTIP. Residues 80–100 are Extracellular-facing; sequence KLLQNMQNQDPSIPYADCLTQ. A disulfide bridge links Cys97 with Cys189. A helical transmembrane segment spans residues 101–120; sequence MYFFLLFGDLESFLLVAMAY. The Cytoplasmic segment spans residues 121–139; it reads DRYVAICFPLHYTAIMSPM. Residues 140-158 traverse the membrane as a helical segment; the sequence is LCLSLVALSWVLTTFHAML. Over 159–196 the chain is Extracellular; the sequence is HTLLMARLCFCADNVIPHFFCDMSALLKLACSDTRVNE. The chain crosses the membrane as a helical span at residues 197-219; that stretch reads WVIFIMGGLIVVIPFLLILGSYA. At 220–236 the chain is on the cytoplasmic side; sequence RIVSSILKVPSSKGICK. The helical transmembrane segment at 237 to 260 threads the bilayer; that stretch reads AFSTCGSHLSVVSLFYGTIIGLYL. Topologically, residues 261–272 are extracellular; sequence CPSANSSTLKET. Asn265 carries N-linked (GlcNAc...) asparagine glycosylation. Residues 273-292 traverse the membrane as a helical segment; it reads VMAMMYTVVTPMLNPFIYSL. Residues 293-314 are Cytoplasmic-facing; the sequence is RNRDMKGALERVIXKRKNPFLL.

It belongs to the G-protein coupled receptor 1 family.

The protein resides in the cell membrane. Its function is as follows. Odorant receptor. In Pan troglodytes (Chimpanzee), this protein is Olfactory receptor 1E5 (OR1E5).